A 66-amino-acid chain; its full sequence is Large ribosomal subunit protein uL30 (66 aa).

Belongs to the universal ribosomal protein uL30 family. Part of the 50S ribosomal subunit.

The sequence is that of Large ribosomal subunit protein uL30 from Chloroherpeton thalassium (strain ATCC 35110 / GB-78).